A 221-amino-acid chain; its full sequence is Thiamine-phosphate synthase (221 aa).

4-amino-2-methyl-5-(diphosphooxymethyl)pyrimidine contacts are provided by residues 44 to 48 (QLRLK) and asparagine 80. 2 residues coordinate Mg(2+): aspartate 81 and aspartate 100. Threonine 119 serves as a coordination point for 4-amino-2-methyl-5-(diphosphooxymethyl)pyrimidine. 146 to 148 (TTT) contributes to the 2-[(2R,5Z)-2-carboxy-4-methylthiazol-5(2H)-ylidene]ethyl phosphate binding site. Lysine 149 serves as a coordination point for 4-amino-2-methyl-5-(diphosphooxymethyl)pyrimidine. A 2-[(2R,5Z)-2-carboxy-4-methylthiazol-5(2H)-ylidene]ethyl phosphate-binding site is contributed by glycine 176.

It belongs to the thiamine-phosphate synthase family. Requires Mg(2+) as cofactor.

It catalyses the reaction 2-[(2R,5Z)-2-carboxy-4-methylthiazol-5(2H)-ylidene]ethyl phosphate + 4-amino-2-methyl-5-(diphosphooxymethyl)pyrimidine + 2 H(+) = thiamine phosphate + CO2 + diphosphate. It carries out the reaction 2-(2-carboxy-4-methylthiazol-5-yl)ethyl phosphate + 4-amino-2-methyl-5-(diphosphooxymethyl)pyrimidine + 2 H(+) = thiamine phosphate + CO2 + diphosphate. The enzyme catalyses 4-methyl-5-(2-phosphooxyethyl)-thiazole + 4-amino-2-methyl-5-(diphosphooxymethyl)pyrimidine + H(+) = thiamine phosphate + diphosphate. The protein operates within cofactor biosynthesis; thiamine diphosphate biosynthesis; thiamine phosphate from 4-amino-2-methyl-5-diphosphomethylpyrimidine and 4-methyl-5-(2-phosphoethyl)-thiazole: step 1/1. Its function is as follows. Condenses 4-methyl-5-(beta-hydroxyethyl)thiazole monophosphate (THZ-P) and 2-methyl-4-amino-5-hydroxymethyl pyrimidine pyrophosphate (HMP-PP) to form thiamine monophosphate (TMP). The sequence is that of Thiamine-phosphate synthase from Hyphomonas neptunium (strain ATCC 15444).